Consider the following 1131-residue polypeptide: ATP-dependent helicase FUN30 (1131 aa).

Positions 1 to 70 (MSGSHSNDED…HTSKPLPSGS (70 aa)) are disordered. Residues 16-36 (PETSSPTKVASSSPLKPTSPT) show a composition bias toward polar residues. Positions 76–111 (VNLAREFPDFSQTLVQAVFKSNSFNLQSARERLTRL) are CUE-like region. Residues 114–141 (QRQNWTWNKNASPKKSETPPPVKKSLPL) form a disordered region. Residue S232 is modified to Phosphoserine. Disordered stretches follow at residues 242 to 273 (KYGR…YTES) and 327 to 350 (NDKD…ANES). The segment covering 250-271 (NDEEEEESMMTDDDDASGDDYT) has biased composition (acidic residues). Residue S369 is modified to Phosphoserine. Residues 400 to 533 (DLMNLGEDDD…GDDDDDDDDE (134 aa)) are disordered. Acidic residues predominate over residues 405 to 416 (GEDDDDDNDDGN). A compositionally biased stretch (low complexity) spans 417 to 432 (NDNNNSNNNNTAGADA). Over residues 433–442 (TSKEKEDTKA) the composition is skewed to basic and acidic residues. Position 451 is a phosphoserine (S451). Positions 480 to 533 (EDEDDDVDLEAIDDELPQSEHEDDDYEEEDEDYNDEEEDVEYDDGDDDDDDDDE) are enriched in acidic residues. Positions 584-752 (NLLYQNKMSC…MSLLEFIMPN (169 aa)) constitute a Helicase ATP-binding domain. 597-604 (DDMGLGKT) serves as a coordination point for ATP. A DEGH box motif is present at residues 703–706 (DEGH). Residues 953-1108 (ALKKLLKTII…EDKKSQDVLE (156 aa)) form the Helicase C-terminal domain.

The protein belongs to the SNF2/RAD54 helicase family. Homodimer.

It is found in the nucleus. It localises to the chromosome. It catalyses the reaction ATP + H2O = ADP + phosphate + H(+). Functionally, DNA helicase that possesses intrinsic ATP-dependent nucleosome-remodeling activity and is both required for DNA repair and heterochromatin organization. Promotes DNA end resection of double-strand breaks (DSBs) following DNA damage: probably acts by weakening histone DNA interactions in nucleosomes flanking DSBs, facilitating single-stranded DNA (ssDNA) production by the EXO1 and SGS1 machinery. Promotes gene silencing at heterochromatin by regulating the chromatin structure within or around silent loci. Also required for heterochromatin organization at centromeres. The protein is ATP-dependent helicase FUN30 (FUN30) of Saccharomyces cerevisiae (strain ATCC 204508 / S288c) (Baker's yeast).